A 94-amino-acid chain; its full sequence is Evasin P1104 (94 aa).

An N-terminal signal peptide occupies residues 1–28 (MASNLFTIFQLAGFVAIVFIVNLHSVSA). 3 disulfides stabilise this stretch: C48/C66, C52/C68, and C62/C79. N-linked (GlcNAc...) asparagine glycosylation occurs at N51.

Its subcellular location is the secreted. Its function is as follows. Salivary chemokine-binding protein which binds to host chemokines CXCL1, CXCL2, CXCL3, CXCL5, CXCL6, CXCL12 and CXCL13. The sequence is that of Evasin P1104 from Ixodes ricinus (Common tick).